We begin with the raw amino-acid sequence, 1571 residues long: Pentafunctional AROM polypeptide (1571 aa).

The 3-dehydroquinate synthase stretch occupies residues 1-380; that stretch reads MTSVEKVSIL…YQLKAHQVSK (380 aa). Residues 43–45, 81–84, 112–114, and Asp-117 each bind NAD(+); these read DTN, ENNK, and GGV. Arg-128 serves as a coordination point for 7-phospho-2-dehydro-3-deoxy-D-arabino-heptonate. 137–138 lines the NAD(+) pocket; sequence TS. 7-phospho-2-dehydro-3-deoxy-D-arabino-heptonate-binding residues include Asp-144 and Lys-150. Residue Lys-159 coordinates NAD(+). Asn-160 is a binding site for 7-phospho-2-dehydro-3-deoxy-D-arabino-heptonate. NAD(+) contacts are provided by residues 177–180 and Asn-188; that span reads FLET. Position 192 (Glu-192) interacts with Zn(2+). 7-phospho-2-dehydro-3-deoxy-D-arabino-heptonate is bound by residues 192 to 195 and Lys-244; that span reads EVVK. Glu-254 functions as the Proton acceptor; for 3-dehydroquinate synthase activity in the catalytic mechanism. 7-phospho-2-dehydro-3-deoxy-D-arabino-heptonate is bound by residues 258–262 and His-265; that span reads RNLLN. A Zn(2+)-binding site is contributed by His-265. The active-site Proton acceptor; for 3-dehydroquinate synthase activity is the His-269. Residues His-281 and Lys-352 each coordinate 7-phospho-2-dehydro-3-deoxy-D-arabino-heptonate. A Zn(2+)-binding site is contributed by His-281. The interval 393-843 is EPSP synthase; it reads VHPFDDKLIP…WDILHTKFKV (451 aa). Cys-825 serves as the catalytic For EPSP synthase activity. The segment at 868–1058 is shikimate kinase; it reads KRSIIVIGMR…IPKKRSFYTS (191 aa). 875-882 serves as a coordination point for ATP; sequence GMRGAGKS. The tract at residues 1059–1271 is 3-dehydroquinase; sequence LTFSDLTEVA…GNEGALDVAQ (213 aa). Catalysis depends on Lys-1204, which acts as the Schiff-base intermediate with substrate; for 3-dehydroquinate dehydratase activity. The tract at residues 1284–1571 is shikimate dehydrogenase; it reads EKHFWIVGNP…DVVHDAVVNQ (288 aa).

The protein in the N-terminal section; belongs to the sugar phosphate cyclases superfamily. Dehydroquinate synthase family. It in the 2nd section; belongs to the EPSP synthase family. This sequence in the 3rd section; belongs to the shikimate kinase family. In the 4th section; belongs to the type-I 3-dehydroquinase family. The protein in the C-terminal section; belongs to the shikimate dehydrogenase family. Homodimer. Zn(2+) serves as cofactor.

It is found in the cytoplasm. The enzyme catalyses 7-phospho-2-dehydro-3-deoxy-D-arabino-heptonate = 3-dehydroquinate + phosphate. It catalyses the reaction 3-dehydroquinate = 3-dehydroshikimate + H2O. The catalysed reaction is shikimate + NADP(+) = 3-dehydroshikimate + NADPH + H(+). It carries out the reaction shikimate + ATP = 3-phosphoshikimate + ADP + H(+). The enzyme catalyses 3-phosphoshikimate + phosphoenolpyruvate = 5-O-(1-carboxyvinyl)-3-phosphoshikimate + phosphate. The protein operates within metabolic intermediate biosynthesis; chorismate biosynthesis; chorismate from D-erythrose 4-phosphate and phosphoenolpyruvate: step 2/7. It functions in the pathway metabolic intermediate biosynthesis; chorismate biosynthesis; chorismate from D-erythrose 4-phosphate and phosphoenolpyruvate: step 3/7. Its pathway is metabolic intermediate biosynthesis; chorismate biosynthesis; chorismate from D-erythrose 4-phosphate and phosphoenolpyruvate: step 4/7. It participates in metabolic intermediate biosynthesis; chorismate biosynthesis; chorismate from D-erythrose 4-phosphate and phosphoenolpyruvate: step 5/7. The protein operates within metabolic intermediate biosynthesis; chorismate biosynthesis; chorismate from D-erythrose 4-phosphate and phosphoenolpyruvate: step 6/7. The AROM polypeptide catalyzes 5 consecutive enzymatic reactions in prechorismate polyaromatic amino acid biosynthesis. The chain is Pentafunctional AROM polypeptide from Scheffersomyces stipitis (strain ATCC 58785 / CBS 6054 / NBRC 10063 / NRRL Y-11545) (Yeast).